Here is a 142-residue protein sequence, read N- to C-terminus: Midkine (142 aa).

The signal sequence occupies residues 1 to 21; the sequence is MELRAFCVILLITFLAVSSQA. 5 cysteine pairs are disulfide-bonded: Cys36/Cys60, Cys44/Cys69, Cys51/Cys73, Cys83/Cys115, and Cys93/Cys125.

It belongs to the pleiotrophin family.

Its subcellular location is the secreted. In terms of biological role, secreted protein that functions as a cytokine and growth factor and mediates its signal through cell-surface proteoglycan and non-proteoglycan receptors. Binds cell-surface proteoglycan receptors via their chondroitin sulfate (CS) groups. Thereby regulates many processes like inflammatory response, cell proliferation, cell adhesion, cell growth, cell survival, tissue regeneration, cell differentiation and cell migration. Inhibits mesoderm formation and promotes neural formation during development. Plays a role in development of the neuromuscular junction (NMJ). Has antibacterial activity against both Gram-positive and Gram-negative bacteria. This Xenopus tropicalis (Western clawed frog) protein is Midkine.